The primary structure comprises 230 residues: Sugar fermentation stimulation protein homolog (230 aa).

Belongs to the SfsA family.

The polypeptide is Sugar fermentation stimulation protein homolog (Pyrococcus furiosus (strain ATCC 43587 / DSM 3638 / JCM 8422 / Vc1)).